Reading from the N-terminus, the 463-residue chain is Chromosomal replication initiator protein DnaA (463 aa).

A domain I, interacts with DnaA modulators region spans residues 1 to 83 (MSTNQIILTD…LQLFQHYNNT (83 aa)). Positions 83 to 124 (TIKSIEIITKELPGTTQTVTELPTKTFADIGSSELNSENIFS) are domain II. The tract at residues 125-343 (TLDARFTFDN…GALNKVIAHS (219 aa)) is domain III, AAA+ region. ATP contacts are provided by glycine 171, glycine 173, lysine 174, and threonine 175. The domain IV, binds dsDNA stretch occupies residues 344–463 (NFTLKEITLE…INLLMKILQN (120 aa)).

It belongs to the DnaA family. As to quaternary structure, oligomerizes as a right-handed, spiral filament on DNA at oriC.

Its subcellular location is the cytoplasm. Plays an essential role in the initiation and regulation of chromosomal replication. ATP-DnaA binds to the origin of replication (oriC) to initiate formation of the DNA replication initiation complex once per cell cycle. Binds the DnaA box (a 9 base pair repeat at the origin) and separates the double-stranded (ds)DNA. Forms a right-handed helical filament on oriC DNA; dsDNA binds to the exterior of the filament while single-stranded (ss)DNA is stabiized in the filament's interior. The ATP-DnaA-oriC complex binds and stabilizes one strand of the AT-rich DNA unwinding element (DUE), permitting loading of DNA polymerase. After initiation quickly degrades to an ADP-DnaA complex that is not apt for DNA replication. Binds acidic phospholipids. In Rickettsia peacockii (strain Rustic), this protein is Chromosomal replication initiator protein DnaA.